A 221-amino-acid chain; its full sequence is Putative transmembrane protein ORF25 (221 aa).

The N-terminal stretch at 1 to 23 (MTLAAKLIVLVYVALCFVNESTS) is a signal peptide. N-linked (GlcNAc...) asparagine; by host glycosylation is found at asparagine 19 and asparagine 179. Topologically, residues 24-191 (QDHSNIYHET…LAKARGVPMS (168 aa)) are extracellular. A helical membrane pass occupies residues 192–212 (VSVISGICAIILVIFPIFITI). The Cytoplasmic portion of the chain corresponds to 213–221 (ANLRRVYLH).

It is found in the host membrane. In Ostreid herpesvirus 1 (isolate France) (OsHV-1), this protein is Putative transmembrane protein ORF25.